Here is a 695-residue protein sequence, read N- to C-terminus: Elongation factor G (695 aa).

The region spanning 8–282 is the tr-type G domain; the sequence is KDTRNIGIMA…AIVDYMPAPI (275 aa). GTP is bound by residues 17 to 24, 81 to 85, and 135 to 138; these read AHIDAGKT, DTPGH, and NKMD. Positions 285–304 are disordered; the sequence is PDIKGVDPQTDEPTTRKSSD.

It belongs to the TRAFAC class translation factor GTPase superfamily. Classic translation factor GTPase family. EF-G/EF-2 subfamily.

The protein resides in the cytoplasm. Functionally, catalyzes the GTP-dependent ribosomal translocation step during translation elongation. During this step, the ribosome changes from the pre-translocational (PRE) to the post-translocational (POST) state as the newly formed A-site-bound peptidyl-tRNA and P-site-bound deacylated tRNA move to the P and E sites, respectively. Catalyzes the coordinated movement of the two tRNA molecules, the mRNA and conformational changes in the ribosome. In Finegoldia magna (strain ATCC 29328 / DSM 20472 / WAL 2508) (Peptostreptococcus magnus), this protein is Elongation factor G.